We begin with the raw amino-acid sequence, 202 residues long: Superoxide dismutase [Mn] (202 aa).

Position 27 (His-27) interacts with Mn(2+). Residues Thr-34 and Thr-70 each carry the phosphothreonine modification. His-82, Asp-164, and His-168 together coordinate Mn(2+).

It belongs to the iron/manganese superoxide dismutase family. As to quaternary structure, homodimer; under aerobic conditions. Under anaerobic conditions it is a component of the so-called 'green protein' complex (GPC), which consists of at least two components, SodA and a nucleoside diphosphate kinase (NDK). Mn(2+) is required as a cofactor.

The protein localises to the cytoplasm. The catalysed reaction is 2 superoxide + 2 H(+) = H2O2 + O2. Destroys superoxide anion radicals which are normally produced within the cells and which are toxic to biological systems. Active only in homodimeric state. In Virgibacillus halodenitrificans (Bacillus halodenitrificans), this protein is Superoxide dismutase [Mn] (sodA).